The following is a 157-amino-acid chain: Cyclic pyranopterin monophosphate synthase (157 aa).

Substrate-binding positions include 73–75 (LCH) and 110–111 (ME). Residue aspartate 125 is part of the active site.

This sequence belongs to the MoaC family. As to quaternary structure, homohexamer; trimer of dimers.

The enzyme catalyses (8S)-3',8-cyclo-7,8-dihydroguanosine 5'-triphosphate = cyclic pyranopterin phosphate + diphosphate. Its pathway is cofactor biosynthesis; molybdopterin biosynthesis. Functionally, catalyzes the conversion of (8S)-3',8-cyclo-7,8-dihydroguanosine 5'-triphosphate to cyclic pyranopterin monophosphate (cPMP). The polypeptide is Cyclic pyranopterin monophosphate synthase (Pseudomonas fluorescens (strain SBW25)).